Here is a 276-residue protein sequence, read N- to C-terminus: MKLCDFEVGLDQPLFLIAGPCVIESMQLQLDVAGRLKEITGKLGVNFIFKSSFDKANRTSGTSFRGPGLEEGLKVLDAVKKQIGVPVLTDVHEYTPMNEVAAVVDVLQTPAFLVRQTDFIKNVCAAGKPVNIKKGQFLAPWDMKPVVDKAKSTGNEQIMVCERGASFGYNNLVSDMRSLSVMRDTGCPVVFDATHSVQLPGGQGSSSGGQREFVPVLARAAVAVGISGLFAETHPDPSKALSDGPNAWPLDRMEELLETLMELDAVTKKHGFARFA.

This sequence belongs to the KdsA family.

It localises to the cytoplasm. It carries out the reaction D-arabinose 5-phosphate + phosphoenolpyruvate + H2O = 3-deoxy-alpha-D-manno-2-octulosonate-8-phosphate + phosphate. It participates in carbohydrate biosynthesis; 3-deoxy-D-manno-octulosonate biosynthesis; 3-deoxy-D-manno-octulosonate from D-ribulose 5-phosphate: step 2/3. The protein operates within bacterial outer membrane biogenesis; lipopolysaccharide biosynthesis. The polypeptide is 2-dehydro-3-deoxyphosphooctonate aldolase (Xanthomonas euvesicatoria pv. vesicatoria (strain 85-10) (Xanthomonas campestris pv. vesicatoria)).